Here is a 223-residue protein sequence, read N- to C-terminus: GRF1-interacting factor 3 (223 aa).

Residues A179–K223 are disordered. The segment covering G214–K223 has biased composition (basic and acidic residues).

Belongs to the SS18 family. Interacts with GRF1. In terms of tissue distribution, predominantly expressed in shoot tips containing the shoot apical meristem (SAM) and flower buds. Also expressed in mature flowers.

Functionally, transcription coactivator that plays a role in the regulation of cell expansion in leaf and cotyledons tissues. Component of a network formed by miR396, the GRFs and their interacting factors (GIFs) acting in the regulation of meristem function, at least partially through the control of cell proliferation. GIFs are involved in the positive regulation of cell proliferation of lateral organs in a functionally redundant manner. The chain is GRF1-interacting factor 3 (GIF3) from Arabidopsis thaliana (Mouse-ear cress).